The primary structure comprises 38 residues: Large ribosomal subunit protein bL36 (38 aa).

It belongs to the bacterial ribosomal protein bL36 family.

The sequence is that of Large ribosomal subunit protein bL36 from Amoebophilus asiaticus (strain 5a2).